A 406-amino-acid chain; its full sequence is 3-oxoacyl-[acyl-carrier-protein] synthase 1 (406 aa).

Residues 1–403 form the Ketosynthase family 3 (KS3) domain; the sequence is MRRTVITGFG…GTNATLIFKR (403 aa). Catalysis depends on for beta-ketoacyl synthase activity residues Cys162, His297, and His332.

The protein belongs to the thiolase-like superfamily. Beta-ketoacyl-ACP synthases family. In terms of assembly, homodimer.

The protein localises to the cytoplasm. It catalyses the reaction a fatty acyl-[ACP] + malonyl-[ACP] + H(+) = a 3-oxoacyl-[ACP] + holo-[ACP] + CO2. It carries out the reaction (3Z)-decenoyl-[ACP] + malonyl-[ACP] + H(+) = 3-oxo-(5Z)-dodecenoyl-[ACP] + holo-[ACP] + CO2. Its pathway is lipid metabolism; fatty acid biosynthesis. Its function is as follows. Involved in the type II fatty acid elongation cycle. Catalyzes the elongation of a wide range of acyl-ACP by the addition of two carbons from malonyl-ACP to an acyl acceptor. Can also use unsaturated fatty acids. Catalyzes a key reaction in unsaturated fatty acid (UFA) synthesis, the elongation of the cis-3-decenoyl-ACP produced by FabA. This chain is 3-oxoacyl-[acyl-carrier-protein] synthase 1 (fabB), found in Haemophilus influenzae (strain ATCC 51907 / DSM 11121 / KW20 / Rd).